A 383-amino-acid chain; its full sequence is 1-deoxy-D-xylulose 5-phosphate reductoisomerase (383 aa).

Thr-10, Gly-11, Ser-12, Ile-13, Gly-36, Lys-37, Asn-38, and Asn-122 together coordinate NADPH. Residue Lys-123 participates in 1-deoxy-D-xylulose 5-phosphate binding. Residue Glu-124 coordinates NADPH. Asp-148 lines the Mn(2+) pocket. 1-deoxy-D-xylulose 5-phosphate contacts are provided by Ser-149, Glu-150, Ser-174, and His-197. Glu-150 contacts Mn(2+). Gly-203 is a binding site for NADPH. Positions 210, 215, 216, and 219 each coordinate 1-deoxy-D-xylulose 5-phosphate. Glu-219 is a Mn(2+) binding site.

This sequence belongs to the DXR family. Mg(2+) is required as a cofactor. It depends on Mn(2+) as a cofactor.

It catalyses the reaction 2-C-methyl-D-erythritol 4-phosphate + NADP(+) = 1-deoxy-D-xylulose 5-phosphate + NADPH + H(+). It functions in the pathway isoprenoid biosynthesis; isopentenyl diphosphate biosynthesis via DXP pathway; isopentenyl diphosphate from 1-deoxy-D-xylulose 5-phosphate: step 1/6. Its function is as follows. Catalyzes the NADPH-dependent rearrangement and reduction of 1-deoxy-D-xylulose-5-phosphate (DXP) to 2-C-methyl-D-erythritol 4-phosphate (MEP). The sequence is that of 1-deoxy-D-xylulose 5-phosphate reductoisomerase from Bacillus velezensis (strain DSM 23117 / BGSC 10A6 / LMG 26770 / FZB42) (Bacillus amyloliquefaciens subsp. plantarum).